A 425-amino-acid chain; its full sequence is Glutamyl-tRNA reductase (425 aa).

Substrate contacts are provided by residues 49-52 (TCNR), S107, 112-114 (EPQ), and Q118. C50 acts as the Nucleophile in catalysis. Residue 187–192 (GAGETI) participates in NADP(+) binding.

Belongs to the glutamyl-tRNA reductase family. As to quaternary structure, homodimer.

The enzyme catalyses (S)-4-amino-5-oxopentanoate + tRNA(Glu) + NADP(+) = L-glutamyl-tRNA(Glu) + NADPH + H(+). The protein operates within porphyrin-containing compound metabolism; protoporphyrin-IX biosynthesis; 5-aminolevulinate from L-glutamyl-tRNA(Glu): step 1/2. In terms of biological role, catalyzes the NADPH-dependent reduction of glutamyl-tRNA(Glu) to glutamate 1-semialdehyde (GSA). This is Glutamyl-tRNA reductase from Pseudomonas putida (strain GB-1).